The sequence spans 429 residues: Violacein synthase (429 aa).

Residue R3–A21 coordinates FAD.

Requires FAD as cofactor.

The catalysed reaction is protoviolaceinate + NADPH + O2 + H(+) = violaceinate + NADP(+) + H2O. The enzyme catalyses protoviolaceinate + NADH + O2 + H(+) = violaceinate + NAD(+) + H2O. It carries out the reaction protodeoxyviolaceinate + NADPH + O2 + H(+) = deoxyviolaceinate + NADP(+) + H2O. It catalyses the reaction protodeoxyviolaceinate + NADH + O2 + H(+) = deoxyviolaceinate + NAD(+) + H2O. It participates in pigment biosynthesis; violacein biosynthesis. Its function is as follows. Catalyzes the hydroxylation of the 16-position of protoviolaceinate and protodeoxyviolaceinate to form violacein and deoxyviolacein, respectively. The protein is Violacein synthase (vioC) of Chromobacterium violaceum (strain ATCC 12472 / DSM 30191 / JCM 1249 / CCUG 213 / NBRC 12614 / NCIMB 9131 / NCTC 9757 / MK).